We begin with the raw amino-acid sequence, 413 residues long: MGKGRVIFHVDMNSFYASVEMAYDPSLKGKAIAVAGSVKDRRGIVVTSSYEARAKGVRSPIPVWQALRKCPELILIPPNFDRYRSASQKIFSLLEEYTPLVEKVSIDEGYMDVTTTIKKVHPLELAKEIQQRILAEMDLPCSIGIAPNKFLAKMASDMKKPLGITVLRKRDIAEKLWSLPIEEMYGIGRRSVDTYKKYQLHTIGDLAKADPAWLEKKFGINGPRLHCRANGIDERPVDPEAVFHFKSVGNSTTLPEDTTNEGRLTDVLHQLSHSVHVRMKRKHVFCYGVQLTIRYDDRKTITRSRKLEHPIQEKDDIFTVALSLWKQAWNGRPIRLLGVTGYDVIDKKYAYEPLDLFRYEEQIKQATLAETISSIHKRYGKPIVAKGKDLDLFKEVDETKKGTSFDRDFFQHD.

The UmuC domain maps to 7–188 (IFHVDMNSFY…LPIEEMYGIG (182 aa)). Mg(2+) contacts are provided by aspartate 11 and aspartate 107. Residue glutamate 108 is part of the active site.

This sequence belongs to the DNA polymerase type-Y family. Monomer. The cofactor is Mg(2+).

It localises to the cytoplasm. It catalyses the reaction DNA(n) + a 2'-deoxyribonucleoside 5'-triphosphate = DNA(n+1) + diphosphate. Its function is as follows. Poorly processive, error-prone DNA polymerase involved in untargeted mutagenesis. Copies undamaged DNA at stalled replication forks, which arise in vivo from mismatched or misaligned primer ends. These misaligned primers can be extended by PolIV. Exhibits no 3'-5' exonuclease (proofreading) activity. May be involved in translesional synthesis, in conjunction with the beta clamp from PolIII. In Halalkalibacterium halodurans (strain ATCC BAA-125 / DSM 18197 / FERM 7344 / JCM 9153 / C-125) (Bacillus halodurans), this protein is DNA polymerase IV 1 (dinB1).